The sequence spans 338 residues: Ribosomal RNA small subunit methyltransferase C (338 aa).

Belongs to the methyltransferase superfamily. RsmC family. In terms of assembly, monomer.

The protein resides in the cytoplasm. It catalyses the reaction guanosine(1207) in 16S rRNA + S-adenosyl-L-methionine = N(2)-methylguanosine(1207) in 16S rRNA + S-adenosyl-L-homocysteine + H(+). Its function is as follows. Specifically methylates the guanine in position 1207 of 16S rRNA in the 30S particle. The protein is Ribosomal RNA small subunit methyltransferase C of Buchnera aphidicola subsp. Acyrthosiphon pisum (strain APS) (Acyrthosiphon pisum symbiotic bacterium).